The following is a 555-amino-acid chain: Hydroxylamine reductase (555 aa).

[4Fe-4S] cluster contacts are provided by Cys-5, Cys-8, Cys-17, and Cys-23. Positions 248, 272, 316, 408, 436, 461, 496, and 498 each coordinate hybrid [4Fe-2O-2S] cluster. Cys-408 is subject to Cysteine persulfide.

The protein belongs to the HCP family. [4Fe-4S] cluster is required as a cofactor. The cofactor is hybrid [4Fe-2O-2S] cluster.

The protein resides in the cytoplasm. The catalysed reaction is A + NH4(+) + H2O = hydroxylamine + AH2 + H(+). Functionally, catalyzes the reduction of hydroxylamine to form NH(3) and H(2)O. This is Hydroxylamine reductase from Natranaerobius thermophilus (strain ATCC BAA-1301 / DSM 18059 / JW/NM-WN-LF).